A 569-amino-acid polypeptide reads, in one-letter code: Linoleate hydratase (569 aa).

FAD is bound at residue Y87. Y205 serves as the catalytic Proton donor. FAD-binding residues include V254, S300, and T524.

The protein belongs to the oleate hydratase family. FAD is required as a cofactor.

It localises to the cell membrane. The protein localises to the cytoplasm. It carries out the reaction (9Z,12Z)-octadecadienoate + H2O = (10S)-hydroxy-(12Z)-octadecenoate. The catalysed reaction is (10E,12Z)-octadecadienoate + H2O = (10S)-hydroxy-(12Z)-octadecenoate. The enzyme catalyses (9Z)-octadecenoate + H2O = 10-hydroxyoctadecanoate. It catalyses the reaction (10E)-octadecenoate + H2O = 10-hydroxyoctadecanoate. It carries out the reaction (9E,11E)-octadecadienoate + H2O = 10-hydroxy-(11E)-octadecenoate. The catalysed reaction is (9Z,11E)-octadecadienoate + H2O = 10-hydroxy-(11E)-octadecenoate. The enzyme catalyses (9Z)-hexadecenoate + H2O = 10-hydroxyhexadecanoate. It catalyses the reaction (9Z,12Z,15Z)-octadecatrienoate + H2O = (10S)-hydroxy-(12Z,15Z)-octadecadienoate. It carries out the reaction (6Z,9Z,12Z)-octadecatrienoate + H2O = (10S)-hydroxy-(6Z,12Z)-octadecadienoate. The catalysed reaction is (6Z,9Z,12Z,15Z)-octadecatetraenoate + H2O = (10S)-hydroxy-(6Z,12Z,15Z)-octadecatrienoate. The protein operates within lipid metabolism; fatty acid metabolism. With respect to regulation, the addition of NADH or NADPH highly increases catalytic activity, likely by reducing the cofactor FAD to FADH2. The hydration and dehydration reactions are strongly inhibited by Ag(+), Fe(2+), Cu(2+), Zn(2+), Hg(2+), and Fe(3+). Is involved in a saturation metabolic pathway of polyunsaturated fatty acids, that detoxifies unsaturated fatty acids and generates hydroxy fatty acids, oxo fatty acids, conjugated fatty acids such as conjugated linoleic acids (CLAs), and partially saturated trans-fatty acids as intermediates. CLA-HY catalyzes the hydration and dehydration steps in the production of 10-hydroxy-cis-12-octadecenoate, trans-10,cis-12-CLA, cis-9,trans-11-CLA, trans-9,trans-11-CLA, oleate and trans-10-octadecenoate during linoleate metabolism. Is also able to hydrate palmitoleic acid (cis-9-hexadecenoic acid), oleic acid, alpha-linolenic acid, gamma-linolenic acid, and stearidonic acid into the corresponding 10-hydroxy fatty acids, and dehydrate 10-hydroxy-cis-12,cis-15-octadecadienoic acid, 10-hydroxy-cis-6,cis-12-octadecadienoic acid, and 10-hydroxyoctadecanoic acid into the corresponding fatty acids with cis double bonds at the Delta9 position. As part of the gut microbiome, this enzyme modifies host fatty acid composition and is expected to improve human health by altering lipid metabolism related to the onset of metabolic syndrome. Shows regioselectivity for Delta9 double bond hydration, generating C10 hydroxy groups in the (S)-configuration with high enantioselectivity, when another double bond is in position 12. Is not able to hydrate fatty acids with a trans carbon-carbon double bond at Delta9 position (elaidic acid, trans-9-octadecenoic acid), fatty acid esters (methyl linoleate, monolinolein, dilinolein, and trilinolein), and conjugated fatty acids (conjugated linoleic acids), as well as fatty acids with other chain lengths, such as myristoleic acid (cis-9-tetradecenoic acid), arachidonic acid (cis-5,cis-8,cis-11,cis-14-eicosatetraenoic acid), EPA (cis-5,cis-8,cis-11,cis-14,cis-17-eicosapentaenoic acid), DHA (cis-4,cis-7,cis-10,cis-13,cis-16,cis-19-docosahexaenoic acid) and fatty acids with a cis carbon-carbon double bond at Delta11 position, such as cis-vaccenic acid and cis-11-octadecenoic acid, or fatty alcohols, such as linoleyl alcohol. Is not able to dehydrate 12-hydroxy, 3-hydroxy, and 9-hydroxy fatty acids. In Lactiplantibacillus plantarum (Lactobacillus plantarum), this protein is Linoleate hydratase.